Here is a 61-residue protein sequence, read N- to C-terminus: Large ribosomal subunit protein bL32 (61 aa).

Residues 1 to 10 show a composition bias toward basic residues; that stretch reads MAQPKKKTSN. A disordered region spans residues 1 to 23; sequence MAQPKKKTSNAKRDQRRATWKRK.

It belongs to the bacterial ribosomal protein bL32 family.

The sequence is that of Large ribosomal subunit protein bL32 from Gloeobacter violaceus (strain ATCC 29082 / PCC 7421).